The sequence spans 137 residues: Small ribosomal subunit protein uS11 (137 aa).

Positions 1–10 are enriched in polar residues; sequence MPPKSRSTGP. Disordered regions lie at residues 1-27 and 116-137; these read MPPK…IPHG and GTIS…RRRV. Basic residues predominate over residues 12 to 21; that stretch reads KTQKTRRRDK.

It belongs to the universal ribosomal protein uS11 family. As to quaternary structure, part of the 30S ribosomal subunit. Interacts with proteins S7 and S18. Binds to IF-3.

Functionally, located on the platform of the 30S subunit, it bridges several disparate RNA helices of the 16S rRNA. Forms part of the Shine-Dalgarno cleft in the 70S ribosome. The sequence is that of Small ribosomal subunit protein uS11 from Rhodococcus erythropolis (strain PR4 / NBRC 100887).